The chain runs to 421 residues: ATP-dependent RNA helicase RhlB (421 aa).

Positions 9–37 (QKFSDFALHAKVIEALENKGFHYCTPIQA) match the Q motif motif. Positions 40-219 (LPLTLAGRDV…FEQMNNAEYV (180 aa)) constitute a Helicase ATP-binding domain. 53–60 (AQTGTGKT) provides a ligand contact to ATP. Positions 165–168 (DEAD) match the DEAD box motif. The region spanning 245–390 (RLLQTLIEEE…QSKYNPDALL (146 aa)) is the Helicase C-terminal domain. Positions 386–421 (PDALLSELPPPKRLTRARSGNGPRRTGAPRNRRRPG) are disordered. The span at 405–414 (GNGPRRTGAP) shows a compositional bias: low complexity.

This sequence belongs to the DEAD box helicase family. RhlB subfamily. Component of the RNA degradosome, which is a multiprotein complex involved in RNA processing and mRNA degradation.

It localises to the cytoplasm. The catalysed reaction is ATP + H2O = ADP + phosphate + H(+). DEAD-box RNA helicase involved in RNA degradation. Has RNA-dependent ATPase activity and unwinds double-stranded RNA. The sequence is that of ATP-dependent RNA helicase RhlB from Enterobacter sp. (strain 638).